The following is a 71-amino-acid chain: Vitellogenin-B2 (71 aa).

An N-terminal signal peptide occupies residues 1–15; that stretch reads MRGIILALLLALAGC. Residues 24–71 enclose the Vitellogenin domain; sequence FSESKTYVYNYEGIILNGIPENGLARSGIKLNCKVELSGYAQRSYMLK.

As to expression, produced by the liver, secreted into the blood and then sequestered by receptor mediated endocytosis into growing oocytes, where it is generally cleaved, giving rise to the respective yolk components.

Functionally, precursor of the major egg-yolk proteins that are sources of nutrients during early development of oviparous organisms. This chain is Vitellogenin-B2, found in Xenopus laevis (African clawed frog).